The following is an 87-amino-acid chain: Large ribosomal subunit protein bL31B-2/bL31B-3 (87 aa).

This sequence belongs to the bacterial ribosomal protein bL31 family. Type B subfamily. As to quaternary structure, part of the 50S ribosomal subunit.

This chain is Large ribosomal subunit protein bL31B-2/bL31B-3 (rpmE2-2), found in Escherichia coli O157:H7.